The chain runs to 926 residues: Taz1-interacting factor 1 (926 aa).

Coiled coils occupy residues 461-496 (REAVSNTVQANNSLHEKLAMYQNRCNNLEAMLSHQN) and 548-671 (SFTD…LKQK). Residue Ser-548 is modified to Phosphoserine. The residue at position 550 (Thr-550) is a Phosphothreonine. Position 552 is a phosphoserine (Ser-552).

Belongs to the ATG11 family. As to quaternary structure, homodimer and potential homooligomers. Interacts with taz1.

It localises to the preautophagosomal structure membrane. It is found in the vacuole membrane. Its function is as follows. Involved in cytoplasm to vacuole transport (Cvt), pexophagy, mitophagy and nucleophagy. Recruits mitochondria for their selective degradation via autophagy (mitophagy) during starvation. Works as scaffold proteins that recruit ATG proteins to the preautophagosome (PAS), the site of vesicle/autophagosome formation. Required for atg9 anterograde transport from the mitochondria to the PAS. Required for nitrogen starvation-induced sexual development and for entering the dormant G0 state. The protein is Taz1-interacting factor 1 (taf1) of Schizosaccharomyces pombe (strain 972 / ATCC 24843) (Fission yeast).